Here is a 289-residue protein sequence, read N- to C-terminus: Polyketide biosynthesis malonyl CoA-acyl carrier protein transacylase BaeC (289 aa).

Catalysis depends on residues S87 and H193.

This sequence belongs to the FabD family.

The protein localises to the cytoplasm. It carries out the reaction holo-[ACP] + malonyl-CoA = malonyl-[ACP] + CoA. Its pathway is antibiotic biosynthesis; bacillaene biosynthesis. In terms of biological role, involved in some intermediate steps for the synthesis of the antibiotic polyketide bacillaene which is involved in secondary metabolism. It catalyzes the transfer of the malonyl-CoA group to the acyl-carrier-protein AcpK (Mal-AcpK). The chain is Polyketide biosynthesis malonyl CoA-acyl carrier protein transacylase BaeC (baeC) from Bacillus velezensis (strain DSM 23117 / BGSC 10A6 / LMG 26770 / FZB42) (Bacillus amyloliquefaciens subsp. plantarum).